The sequence spans 234 residues: Triosephosphate isomerase (234 aa).

8–10 (NFK) is a substrate binding site. H90 (electrophile) is an active-site residue. E159 serves as the catalytic Proton acceptor. Substrate is bound by residues G165 and S197.

The protein belongs to the triosephosphate isomerase family. Homodimer.

Its subcellular location is the cytoplasm. It carries out the reaction D-glyceraldehyde 3-phosphate = dihydroxyacetone phosphate. It participates in carbohydrate biosynthesis; gluconeogenesis. The protein operates within carbohydrate degradation; glycolysis; D-glyceraldehyde 3-phosphate from glycerone phosphate: step 1/1. Involved in the gluconeogenesis. Catalyzes stereospecifically the conversion of dihydroxyacetone phosphate (DHAP) to D-glyceraldehyde-3-phosphate (G3P). The chain is Triosephosphate isomerase from Helicobacter pylori (strain G27).